Here is a 134-residue protein sequence, read N- to C-terminus: Small ribosomal subunit protein uS8c (134 aa).

This sequence belongs to the universal ribosomal protein uS8 family. As to quaternary structure, part of the 30S ribosomal subunit.

Its subcellular location is the plastid. The protein resides in the chloroplast. In terms of biological role, one of the primary rRNA binding proteins, it binds directly to 16S rRNA central domain where it helps coordinate assembly of the platform of the 30S subunit. In Helianthus annuus (Common sunflower), this protein is Small ribosomal subunit protein uS8c (rps8).